The sequence spans 157 residues: Ribosome maturation factor RimP (157 aa).

The protein belongs to the RimP family.

Its subcellular location is the cytoplasm. Its function is as follows. Required for maturation of 30S ribosomal subunits. The chain is Ribosome maturation factor RimP from Synechococcus sp. (strain JA-3-3Ab) (Cyanobacteria bacterium Yellowstone A-Prime).